We begin with the raw amino-acid sequence, 133 residues long: Probable nuclear transport factor 2 (133 aa).

The 119-residue stretch at valine 10 to leucine 128 folds into the NTF2 domain.

The protein resides in the cytoplasm. Functionally, facilitates protein transport into the nucleus. Could be part of a multicomponent system of cytosolic factors that assemble at the pore complex during nuclear import. The chain is Probable nuclear transport factor 2 (ran-4) from Caenorhabditis elegans.